We begin with the raw amino-acid sequence, 577 residues long: MNKQDVMKLQTCVLKVNVHCEGCKHKVKKQLQKIEGVYSVKADVEQGRVTVTGNIDPALLVKKLSKSGKHAEILGGGGGGGGGGGKGFPNLNGQFANLNMGGNNKPKGGKESNQVKGKAGGGGGGGQNHGHGQPMQLNPQQIQQMMMMKAAHGGGGGGQMKMPPMAAKDQKKSVKFADDEDDEFSEDDYDDEDFSEDDYDDDEFDDDEDDDDEMGHGHGHGGGGGNHMPPNKMMMPNKMMPQMGGHHGNGGGPKGPNEIMMMMNGFKGGGGGGKKGGGGGFEIPVQMKGMGEGKNGKDGKKGKGGEKGKKEGKENKGGGKTGKTDAKSGGGGLLGFFKKGKSGNGDEKKSAGKKDGHGGNKVKSHGGGGGVQHYDSGPKKGGGGTKGGGHGGLDIDELMKHSKGGGGGGNKGNHNHSAKGIGGGPMGPGGPMGPGGPMGQGGPMGMMGPGGPMSMMGPGGPMGPMGGQGGSYPAVQGLPMSGGGGYYPGPPQASQQMNQQQYMQMMMNQQQQQQQQQQAVAHGGYGGGHGGDMYHPMMYARPYPAVNYAHPPPMPPPHSDSYTHMFSDENPGSCSIM.

Residues 9–72 (LQTCVLKVNV…KLSKSGKHAE (64 aa)) enclose the HMA domain. Cys-20 and Cys-23 together coordinate a metal cation. Positions 77–87 (GGGGGGGGGKG) are enriched in gly residues. 2 disordered regions span residues 77-136 (GGGG…QPMQ) and 150-451 (AAHG…GPGG). Over residues 97–106 (NLNMGGNNKP) the composition is skewed to low complexity. The span at 118 to 129 (KAGGGGGGGQNH) shows a compositional bias: gly residues. Basic and acidic residues predominate over residues 168 to 177 (KDQKKSVKFA). Residues 178 to 213 (DDEDDEFSEDDYDDEDFSEDDYDDDEFDDDEDDDDE) show a composition bias toward acidic residues. Positions 227 to 244 (HMPPNKMMMPNKMMPQMG) are enriched in low complexity. 2 stretches are compositionally biased toward gly residues: residues 245–254 (GHHGNGGGPK) and 266–281 (FKGG…GGGF). Composition is skewed to basic and acidic residues over residues 294–326 (KNGK…KTDA) and 344–358 (NGDE…DGHG). 2 stretches are compositionally biased toward gly residues: residues 379-392 (KKGG…GHGG) and 420-451 (GIGG…GPGG). Position 574 is a cysteine methyl ester (Cys-574). Cys-574 carries the S-farnesyl cysteine lipid modification. The propeptide at 575–577 (SIM) is removed in mature form.

This sequence belongs to the HIPP family.

In terms of biological role, heavy-metal-binding protein. This is Heavy metal-associated isoprenylated plant protein 34 from Arabidopsis thaliana (Mouse-ear cress).